Here is an 85-residue protein sequence, read N- to C-terminus: Large ribosomal subunit protein bL27 (85 aa).

The tract at residues 1–23 (MAHKKGQGSTQNNRDSAGRRLGV) is disordered.

This sequence belongs to the bacterial ribosomal protein bL27 family.

The polypeptide is Large ribosomal subunit protein bL27 (Helicobacter hepaticus (strain ATCC 51449 / 3B1)).